A 233-amino-acid chain; its full sequence is 2-C-methyl-D-erythritol 4-phosphate cytidylyltransferase (233 aa).

It belongs to the IspD/TarI cytidylyltransferase family. IspD subfamily.

It carries out the reaction 2-C-methyl-D-erythritol 4-phosphate + CTP + H(+) = 4-CDP-2-C-methyl-D-erythritol + diphosphate. It functions in the pathway isoprenoid biosynthesis; isopentenyl diphosphate biosynthesis via DXP pathway; isopentenyl diphosphate from 1-deoxy-D-xylulose 5-phosphate: step 2/6. Catalyzes the formation of 4-diphosphocytidyl-2-C-methyl-D-erythritol from CTP and 2-C-methyl-D-erythritol 4-phosphate (MEP). The protein is 2-C-methyl-D-erythritol 4-phosphate cytidylyltransferase of Aromatoleum aromaticum (strain DSM 19018 / LMG 30748 / EbN1) (Azoarcus sp. (strain EbN1)).